A 120-amino-acid chain; its full sequence is Seminal plasma protein HSP-1 (120 aa).

2 consecutive repeat copies span residues 1-13 (DLQT…SATV) and 16-28 (DQQL…SATV). The tract at residues 1–28 (DLQTTGADHSATVNPDQQLIMTKHSATV) is 2 X approximate repeats. 4 O-linked (GalNAc...) threonine glycosylation sites follow: Thr-5, Thr-12, Thr-22, and Thr-27. Fibronectin type-II domains follow at residues 29 to 73 (TPEN…YCAA) and 74 to 120 (TDYA…WKYC). Disulfide bonds link Cys-34–Cys-58, Cys-48–Cys-71, Cys-79–Cys-105, and Cys-93–Cys-120.

Belongs to the seminal plasma protein family. In terms of assembly, one glycoform exists as a monomer while the other forms a heterotetramer with HSP-2 and binds heparin. O-glycosylated on Thr. There are two forms of HSP-1 which probably differ in the amount of sialylation of polysaccharide. Major component of seminal plasma.

The protein resides in the secreted. Could enhance the fertilizing capacity of spermatozoa upon interaction with heparin-like glycosaminoglycans present in the female genital tract. This is Seminal plasma protein HSP-1 from Equus caballus (Horse).